The following is a 209-amino-acid chain: Mitochondrial import inner membrane translocase subunit Tim23 (209 aa).

The next 3 membrane-spanning stretches (helical) occupy residues 73–93 (FELAFFTIGGCCISGAAFGAL), 125–145 (ALWANTLGSLALLYSAFGVIV), and 180–200 (GGLAGLALASTFALYNNWEHI).

The protein belongs to the Tim17/Tim22/Tim23 family. In terms of assembly, component of the TIM23 complex at least composed of timm23, timm17 and timm50. The complex interacts with the timm44 component of the PAM complex.

The protein resides in the mitochondrion inner membrane. Functionally, essential component of the TIM23 complex, a complex that mediates the translocation of transit peptide-containing proteins across the mitochondrial inner membrane. This chain is Mitochondrial import inner membrane translocase subunit Tim23 (timm23), found in Xenopus laevis (African clawed frog).